The primary structure comprises 216 residues: Protein GrpE (216 aa).

2 disordered regions span residues 1-45 and 185-216; these read MTEE…LDPT and RVAV…TEEV. Positions 205–216 are enriched in acidic residues; sequence TDDEESGGTEEV.

This sequence belongs to the GrpE family. In terms of assembly, homodimer.

The protein localises to the cytoplasm. Participates actively in the response to hyperosmotic and heat shock by preventing the aggregation of stress-denatured proteins, in association with DnaK and GrpE. It is the nucleotide exchange factor for DnaK and may function as a thermosensor. Unfolded proteins bind initially to DnaJ; upon interaction with the DnaJ-bound protein, DnaK hydrolyzes its bound ATP, resulting in the formation of a stable complex. GrpE releases ADP from DnaK; ATP binding to DnaK triggers the release of the substrate protein, thus completing the reaction cycle. Several rounds of ATP-dependent interactions between DnaJ, DnaK and GrpE are required for fully efficient folding. The chain is Protein GrpE from Streptomyces griseus subsp. griseus (strain JCM 4626 / CBS 651.72 / NBRC 13350 / KCC S-0626 / ISP 5235).